The sequence spans 168 residues: Large ribosomal subunit protein uL10 (168 aa).

This sequence belongs to the universal ribosomal protein uL10 family. In terms of assembly, part of the ribosomal stalk of the 50S ribosomal subunit. The N-terminus interacts with L11 and the large rRNA to form the base of the stalk. The C-terminus forms an elongated spine to which L12 dimers bind in a sequential fashion forming a multimeric L10(L12)X complex.

Forms part of the ribosomal stalk, playing a central role in the interaction of the ribosome with GTP-bound translation factors. The protein is Large ribosomal subunit protein uL10 of Acidovorax ebreus (strain TPSY) (Diaphorobacter sp. (strain TPSY)).